The sequence spans 118 residues: Large ribosomal subunit protein uL18 (118 aa).

The protein belongs to the universal ribosomal protein uL18 family. As to quaternary structure, part of the 50S ribosomal subunit; part of the 5S rRNA/L5/L18/L25 subcomplex. Contacts the 5S and 23S rRNAs.

This is one of the proteins that bind and probably mediate the attachment of the 5S RNA into the large ribosomal subunit, where it forms part of the central protuberance. This chain is Large ribosomal subunit protein uL18, found in Rhizorhabdus wittichii (strain DSM 6014 / CCUG 31198 / JCM 15750 / NBRC 105917 / EY 4224 / RW1) (Sphingomonas wittichii).